Consider the following 149-residue polypeptide: Aspartate 1-decarboxylase (149 aa).

The active-site Schiff-base intermediate with substrate; via pyruvic acid is S25. S25 is subject to Pyruvic acid (Ser). Residue T57 coordinates substrate. Y58 functions as the Proton donor in the catalytic mechanism. Substrate is bound at residue 73–75 (GAA). Residues 119–149 (GDPAAALPGDPSSLRGDVLDPAGARGLGGGA) are disordered.

It belongs to the PanD family. In terms of assembly, heterooctamer of four alpha and four beta subunits. Requires pyruvate as cofactor. In terms of processing, is synthesized initially as an inactive proenzyme, which is activated by self-cleavage at a specific serine bond to produce a beta-subunit with a hydroxyl group at its C-terminus and an alpha-subunit with a pyruvoyl group at its N-terminus.

Its subcellular location is the cytoplasm. The catalysed reaction is L-aspartate + H(+) = beta-alanine + CO2. The protein operates within cofactor biosynthesis; (R)-pantothenate biosynthesis; beta-alanine from L-aspartate: step 1/1. In terms of biological role, catalyzes the pyruvoyl-dependent decarboxylation of aspartate to produce beta-alanine. The sequence is that of Aspartate 1-decarboxylase from Parafrankia sp. (strain EAN1pec).